A 186-amino-acid chain; its full sequence is Elongation factor P (186 aa).

The protein belongs to the elongation factor P family.

Its subcellular location is the cytoplasm. The protein operates within protein biosynthesis; polypeptide chain elongation. In terms of biological role, involved in peptide bond synthesis. Stimulates efficient translation and peptide-bond synthesis on native or reconstituted 70S ribosomes in vitro. Probably functions indirectly by altering the affinity of the ribosome for aminoacyl-tRNA, thus increasing their reactivity as acceptors for peptidyl transferase. This chain is Elongation factor P, found in Streptococcus agalactiae serotype Ia (strain ATCC 27591 / A909 / CDC SS700).